We begin with the raw amino-acid sequence, 215 residues long: Imidazole glycerol phosphate synthase subunit HisH (215 aa).

One can recognise a Glutamine amidotransferase type-1 domain in the interval 8–215 (KVVVFDYGFG…QLLNNWIGTL (208 aa)). Cys-86 functions as the Nucleophile in the catalytic mechanism. Catalysis depends on residues His-196 and Glu-198.

Heterodimer of HisH and HisF.

Its subcellular location is the cytoplasm. The enzyme catalyses 5-[(5-phospho-1-deoxy-D-ribulos-1-ylimino)methylamino]-1-(5-phospho-beta-D-ribosyl)imidazole-4-carboxamide + L-glutamine = D-erythro-1-(imidazol-4-yl)glycerol 3-phosphate + 5-amino-1-(5-phospho-beta-D-ribosyl)imidazole-4-carboxamide + L-glutamate + H(+). The catalysed reaction is L-glutamine + H2O = L-glutamate + NH4(+). It functions in the pathway amino-acid biosynthesis; L-histidine biosynthesis; L-histidine from 5-phospho-alpha-D-ribose 1-diphosphate: step 5/9. In terms of biological role, IGPS catalyzes the conversion of PRFAR and glutamine to IGP, AICAR and glutamate. The HisH subunit catalyzes the hydrolysis of glutamine to glutamate and ammonia as part of the synthesis of IGP and AICAR. The resulting ammonia molecule is channeled to the active site of HisF. In Streptomyces avermitilis (strain ATCC 31267 / DSM 46492 / JCM 5070 / NBRC 14893 / NCIMB 12804 / NRRL 8165 / MA-4680), this protein is Imidazole glycerol phosphate synthase subunit HisH.